The primary structure comprises 79 residues: Putative membrane protein insertion efficiency factor (79 aa).

It belongs to the UPF0161 family.

It localises to the cell inner membrane. In terms of biological role, could be involved in insertion of integral membrane proteins into the membrane. This Synechocystis sp. (strain ATCC 27184 / PCC 6803 / Kazusa) protein is Putative membrane protein insertion efficiency factor.